The chain runs to 3432 residues: Genome polyprotein (3432 aa).

The interaction with host EXOC1 stretch occupies residues 2–15 (TKKPGGPGKNRAIN). The Cytoplasmic portion of the chain corresponds to 2–109 (TKKPGGPGKN…RKQNKRGGNE (108 aa)). Residues 37-72 (LLDGRGPVRFVLALITFFKFTALAPTKALLGRWKAV) form a hydrophobic; homodimerization of capsid protein C region. The propeptide at 106–127 (GGNEGSIMWLASLAVVIAYAGA) is ER anchor for the capsid protein C, removed in mature form by serine protease NS3. Residues 110–130 (GSIMWLASLAVVIAYAGAMKL) traverse the membrane as a helical segment. The Extracellular segment spans residues 131–253 (SNFQGKLLMT…ATRYLMKTEN (123 aa)). A glycan (N-linked (GlcNAc...) asparagine; by host) is linked at Asn-142. The chain crosses the membrane as a helical span at residues 254 to 274 (WIIRNPGYAFLAATLGWMLGS). Residues 275–279 (NNGQR) are Cytoplasmic-facing. Residues 280-294 (VVFTILLLLVAPAYS) traverse the membrane as a helical segment. Topologically, residues 295-746 (FNCLGMGNRD…QVFGGAFRTL (452 aa)) are extracellular. 6 cysteine pairs are disulfide-bonded: Cys-297–Cys-324, Cys-354–Cys-410, Cys-354–Cys-415, Cys-368–Cys-399, Cys-386–Cys-410, and Cys-386–Cys-415. Residues 392–405 (DRGWGNGCGLFGKG) are fusion peptide. The N-linked (GlcNAc...) asparagine; by host glycan is linked to Asn-448. Cystine bridges form between Cys-484–Cys-581 and Cys-598–Cys-629. The chain crosses the membrane as a helical span at residues 747–767 (FGGMSWITQGLMGALLLWMGV). Residues 768–773 (NARDRS) are Cytoplasmic-facing. The helical transmembrane segment at 774-794 (IALAFLATGGVLVFLATNVHA) threads the bilayer. The Extracellular portion of the chain corresponds to 795–1219 (DTGCAIDITR…AFAEANSGGD (425 aa)). 6 cysteine pairs are disulfide-bonded: Cys-798–Cys-809, Cys-849–Cys-937, Cys-973–Cys-1017, Cys-1074–Cys-1123, Cys-1085–Cys-1106, and Cys-1107–Cys-1110. 2 N-linked (GlcNAc...) asparagine; by host glycosylation sites follow: Asn-924 and Asn-1001. A helical transmembrane segment spans residues 1220 to 1240 (VLHLALIAVFKIQPAFLVMNM). The Cytoplasmic portion of the chain corresponds to 1241 to 1250 (LSTRWTNQEN). The helical transmembrane segment at 1251 to 1271 (VVLVLGAALFQLASVDLQIGV) threads the bilayer. A topological domain (lumenal) is located at residue His-1272. Residues 1273-1293 (GILNAAAIAWMIVRAITFPTT) traverse the membrane as a helical segment. Residues 1294–1309 (SSVTMPVLALLTPGMR) are Cytoplasmic-facing. A helical membrane pass occupies residues 1310 to 1330 (ALYLDTYRIILLVIGICSLLQ). Over 1331–1341 (ERKKTMAKKKG) the chain is Lumenal. The chain crosses the membrane as a helical span at residues 1342-1362 (AVLLGLALTSTGWFSPTTIAA). Topologically, residues 1363 to 1374 (GLMVCNPNKKRG) are cytoplasmic. Residues 1375–1395 (WPATEFLSAVGLMFAIVGGLA) form a helical membrane-spanning segment. Over 1396 to 1398 (ELD) the chain is Lumenal. Residues 1399-1419 (IESMSIPFMLAGLMAVSYVVS) traverse the membrane as a helical segment. Topologically, residues 1420-1476 (GKATDMWLERAADISWEMDAAITGSSRRLDVKLDDDGDFHLIDDPGVPWKVWVLRMS) are cytoplasmic. An interacts with and activates NS3 protease region spans residues 1427–1466 (LERAADISWEMDAAITGSSRRLDVKLDDDGDFHLIDDPGV). Residues 1477–1497 (CIGLAALTPWAIVPAAFGYWL) constitute an intramembrane region (helical). At 1498–2173 (TLKTTKRGGV…RMALEELPDA (676 aa)) the chain is on the cytoplasmic side. The region spanning 1505–1682 (GGVFWDTPSP…DRQEEPVPEA (178 aa)) is the Peptidase S7 domain. Catalysis depends on charge relay system; for serine protease NS3 activity residues His-1555, Asp-1579, and Ser-1639. One can recognise a Helicase ATP-binding domain in the interval 1685–1841 (PNMLRKRQMT…DSNAPIHDLQ (157 aa)). Positions 1689–1692 (RKRQ) are important for RNA-binding. 1698–1705 (LHPGSGKT) serves as a coordination point for ATP. The short motif at 1789 to 1792 (DEAH) is the DEAH box element. The Helicase C-terminal domain occupies 1852-2017 (GYEWITEYAG…GLVAQLYGPE (166 aa)). At Lys-1893 the chain carries N6-acetyllysine; by host. Positions 1950 to 1971 (NPSPITSASAAQRRGRVGRNPN) are disordered. The tract at residues 2168 to 2172 (EELPD) is regulates the ATPase activity of NS3 helicase. Residues 2174–2194 (LETITLIVAITVMTGGFFLLM) form a helical membrane-spanning segment. The Lumenal portion of the chain corresponds to 2195-2199 (MQRKG). Positions 2200–2220 (IGKMGLGALVLTLATFFLWAA) form an intramembrane region, helical. Glu-2221 is a topological domain (lumenal). A helical transmembrane segment spans residues 2222-2242 (VPGTKIAGTLLIALLLMVVLI). Over 2243-2257 (PEPEKQRSQTDNQLA) the chain is Cytoplasmic. A helical membrane pass occupies residues 2258–2278 (VFLICVLTVVGVVAANEYGML). Topologically, residues 2279–2311 (EKTKADLKSMFVGKTQASGLTGLPSMALDLRPA) are lumenal. Positions 2312 to 2332 (TAWALYGGSTVVLTPLLKHLI) form an intramembrane region, helical. At 2333-2368 (TSEYVTTSLASINSQAGSLFVLPRGVPFTDLDLTVG) the chain is on the lumenal side. Residues 2369–2389 (LVFLGCWGQITLTTFLTAMVL) traverse the membrane as a helical segment. Topologically, residues 2390–2444 (ATLHYGYMLPGWQAEALRAAQRRTAAGIMKNAVVDGMVATDVPELERTTPLMQKK) are cytoplasmic. A helical membrane pass occupies residues 2445–2465 (VGQVLLIGVSVAAFLVNPNVT). Topologically, residues 2466 to 2469 (TVRE) are lumenal. Residues 2470–2490 (AGVLVTAATLTLWDNGASAVW) traverse the membrane as a helical segment. The Cytoplasmic portion of the chain corresponds to 2491–3432 (NSTTATGLCH…DVLIQEDRVI (942 aa)). Residues 2528 to 2793 (GRPGGRTLGE…DVNLGSGTRA (266 aa)) form the mRNA cap 0-1 NS5-type MT domain. Ser-2583 serves as a coordination point for S-adenosyl-L-methionine. Position 2583 is a phosphoserine (Ser-2583). Lys-2588 acts as the For 2'-O-MTase activity in catalysis. S-adenosyl-L-methionine is bound by residues Gly-2613, Trp-2614, Thr-2631, Lys-2632, Asp-2658, and Val-2659. The active-site For 2'-O-MTase activity is the Asp-2673. Position 2674 (Ile-2674) interacts with S-adenosyl-L-methionine. Active-site for 2'-O-MTase activity residues include Lys-2709 and Glu-2745. Tyr-2747 is an S-adenosyl-L-methionine binding site. Residues Glu-2967, His-2971, Cys-2976, and Cys-2979 each contribute to the Zn(2+) site. The 153-residue stretch at 3057-3209 (GKMYADDTAG…KPLDDRFATA (153 aa)) folds into the RdRp catalytic domain. Zn(2+) contacts are provided by His-3244, Cys-3260, and Cys-3379.

It in the N-terminal section; belongs to the class I-like SAM-binding methyltransferase superfamily. mRNA cap 0-1 NS5-type methyltransferase family. Homodimer. Interacts (via N-terminus) with host EXOC1 (via C-terminus); this interaction results in EXOC1 degradation through the proteasome degradation pathway. In terms of assembly, forms heterodimers with envelope protein E in the endoplasmic reticulum and Golgi. As to quaternary structure, homodimer; in the endoplasmic reticulum and Golgi. Interacts with protein prM. Interacts with non-structural protein 1. Interacts with host HSPA5. Homodimer; Homohexamer when secreted. Interacts with envelope protein E. NS1 interacts with NS4B. Interacts with host complement protein CFH; this interaction leads to the degradation of C3. In terms of assembly, interacts (via N-terminus) with serine protease NS3. As to quaternary structure, forms a heterodimer with serine protease NS3. May form homooligomers. Forms a heterodimer with NS2B. Interacts with non-structural protein 2A (via N-terminus). Interacts with NS4B. Interacts with unphosphorylated RNA-directed RNA polymerase NS5; this interaction stimulates RNA-directed RNA polymerase NS5 guanylyltransferase activity. Interacts with host ILF2. In terms of assembly, interacts with serine protease NS3. As to quaternary structure, homodimer. Interacts with host STAT2; this interaction inhibits the phosphorylation of the latter, and, when all viral proteins are present (polyprotein), targets STAT2 for degradation. Interacts with serine protease NS3. The cofactor is Mn(2+). Mg(2+) serves as cofactor. Specific enzymatic cleavages in vivo yield mature proteins. Cleavages in the lumen of endoplasmic reticulum are performed by host signal peptidase, whereas cleavages in the cytoplasmic side are performed by serine protease NS3. Signal cleavage at the 2K-4B site requires a prior NS3 protease-mediated cleavage at the 4A-2K site. In terms of processing, cleaved in post-Golgi vesicles by a host furin, releasing the mature small envelope protein M, and peptide pr. This cleavage is incomplete as up to 30% of viral particles still carry uncleaved prM. Post-translationally, N-glycosylated. N-glycosylated. The excreted form is glycosylated and this is required for efficient secretion of the protein from infected cells. In terms of processing, acetylated by host KAT5. Acetylation modulates NS3 RNA-binding and unwinding activities and plays an important positive role for viral replication. Post-translationally, phosphorylated on serines residues. This phosphorylation may trigger NS5 nuclear localization.

Its subcellular location is the virion. It localises to the host nucleus. It is found in the host cytoplasm. The protein localises to the host perinuclear region. The protein resides in the secreted. Its subcellular location is the virion membrane. It localises to the host endoplasmic reticulum membrane. It is found in the host cell surface. It catalyses the reaction Selective hydrolysis of -Xaa-Xaa-|-Yaa- bonds in which each of the Xaa can be either Arg or Lys and Yaa can be either Ser or Ala.. It carries out the reaction RNA(n) + a ribonucleoside 5'-triphosphate = RNA(n+1) + diphosphate. The enzyme catalyses a ribonucleoside 5'-triphosphate + H2O = a ribonucleoside 5'-diphosphate + phosphate + H(+). The catalysed reaction is ATP + H2O = ADP + phosphate + H(+). It catalyses the reaction a 5'-end (5'-triphosphoguanosine)-ribonucleoside in mRNA + S-adenosyl-L-methionine = a 5'-end (N(7)-methyl 5'-triphosphoguanosine)-ribonucleoside in mRNA + S-adenosyl-L-homocysteine. It carries out the reaction a 5'-end (N(7)-methyl 5'-triphosphoguanosine)-ribonucleoside in mRNA + S-adenosyl-L-methionine = a 5'-end (N(7)-methyl 5'-triphosphoguanosine)-(2'-O-methyl-ribonucleoside) in mRNA + S-adenosyl-L-homocysteine + H(+). In terms of biological role, plays a role in virus budding by binding to the cell membrane and gathering the viral RNA into a nucleocapsid that forms the core of a mature virus particle. During virus entry, may induce genome penetration into the host cytoplasm after hemifusion induced by the surface proteins. Can migrate to the cell nucleus where it modulates host functions. Overcomes the anti-viral effects of host EXOC1 by sequestering and degrading the latter through the proteasome degradation pathway. Its function is as follows. Inhibits RNA silencing by interfering with host Dicer. Functionally, prevents premature fusion activity of envelope proteins in trans-Golgi by binding to envelope protein E at pH 6.0. After virion release in extracellular space, gets dissociated from E dimers. Acts as a chaperone for envelope protein E during intracellular virion assembly by masking and inactivating envelope protein E fusion peptide. prM is the only viral peptide matured by host furin in the trans-Golgi network probably to avoid catastrophic activation of the viral fusion activity in acidic Golgi compartment prior to virion release. prM-E cleavage is inefficient, and many virions are only partially matured. These uncleaved prM would play a role in immune evasion. In terms of biological role, may play a role in virus budding. Exerts cytotoxic effects by activating a mitochondrial apoptotic pathway through M ectodomain. May display a viroporin activity. Its function is as follows. Binds to host cell surface receptor and mediates fusion between viral and cellular membranes. Efficient virus attachment to cell is, at least in part, mediated by host HSPA5. Envelope protein is synthesized in the endoplasmic reticulum in the form of heterodimer with protein prM. They play a role in virion budding in the ER, and the newly formed immature particle is covered with 60 spikes composed of heterodimer between precursor prM and envelope protein E. The virion is transported to the Golgi apparatus where the low pH causes dissociation of PrM-E heterodimers and formation of E homodimers. prM-E cleavage is inefficient, and many virions are only partially matured. These uncleaved prM would play a role in immune evasion. Functionally, involved in immune evasion, pathogenesis and viral replication. Once cleaved off the polyprotein, is targeted to three destinations: the viral replication cycle, the plasma membrane and the extracellular compartment. Essential for viral replication. Required for formation of the replication complex and recruitment of other non-structural proteins to the ER-derived membrane structures. Excreted as a hexameric lipoparticle that plays a role against host immune response. Antagonizing the complement function. Binds to the host macrophages and dendritic cells. Inhibits signal transduction originating from Toll-like receptor 3 (TLR3). Component of the viral RNA replication complex that functions in virion assembly and antagonizes the host alpha/beta interferon antiviral response. In terms of biological role, required cofactor for the serine protease function of NS3. May have membrane-destabilizing activity and form viroporins. Its function is as follows. Displays three enzymatic activities: serine protease, NTPase and RNA helicase. NS3 serine protease, in association with NS2B, performs its autocleavage and cleaves the polyprotein at dibasic sites in the cytoplasm: C-prM, NS2A-NS2B, NS2B-NS3, NS3-NS4A, NS4A-2K and NS4B-NS5. NS3 RNA helicase binds RNA and unwinds dsRNA in the 3' to 5' direction. Functionally, regulates the ATPase activity of the NS3 helicase activity. NS4A allows NS3 helicase to conserve energy during unwinding. Functions as a signal peptide for NS4B and is required for the interferon antagonism activity of the latter. In terms of biological role, induces the formation of ER-derived membrane vesicles where the viral replication takes place. Inhibits interferon (IFN)-induced host STAT1 phosphorylation and nuclear translocation, thereby preventing the establishment of cellular antiviral state by blocking the IFN-alpha/beta pathway. Inhibits STAT2 translocation in the nucleus after IFN-alpha treatment. Its function is as follows. Replicates the viral (+) and (-) RNA genome, and performs the capping of genomes in the cytoplasm. NS5 methylates viral RNA cap at guanine N-7 and ribose 2'-O positions. Besides its role in RNA genome replication, also prevents the establishment of cellular antiviral state by blocking the interferon-alpha/beta (IFN-alpha/beta) signaling pathway. Inhibits host TYK2 and STAT2 phosphorylation, thereby preventing activation of JAK-STAT signaling pathway. The protein is Genome polyprotein of Ardeidae (herons).